A 400-amino-acid polypeptide reads, in one-letter code: NADH-quinone oxidoreductase subunit D (400 aa).

The protein belongs to the complex I 49 kDa subunit family. NDH-1 is composed of 14 different subunits. Subunits NuoB, C, D, E, F, and G constitute the peripheral sector of the complex.

The protein localises to the cell inner membrane. It catalyses the reaction a quinone + NADH + 5 H(+)(in) = a quinol + NAD(+) + 4 H(+)(out). In terms of biological role, NDH-1 shuttles electrons from NADH, via FMN and iron-sulfur (Fe-S) centers, to quinones in the respiratory chain. The immediate electron acceptor for the enzyme in this species is believed to be a menaquinone. Couples the redox reaction to proton translocation (for every two electrons transferred, four hydrogen ions are translocated across the cytoplasmic membrane), and thus conserves the redox energy in a proton gradient. This Chlorobaculum parvum (strain DSM 263 / NCIMB 8327) (Chlorobium vibrioforme subsp. thiosulfatophilum) protein is NADH-quinone oxidoreductase subunit D.